Here is a 693-residue protein sequence, read N- to C-terminus: Bacterial dynamin-like protein (693 aa).

The Cytoplasmic segment spans residues 1–521 (MVNQVATDRF…DNSPGWAKWA (521 aa)). The region spanning 66 to 313 (QQGVFRLLVL…QADLDGTGFP (248 aa)) is the Dynamin-type G domain. Residues 76 to 83 (GDMKRGKS) form a G1 motif region. A GTP-binding site is contributed by 79-84 (KRGKST). The segment at 102-103 (CT) is G2 motif. The tract at residues 180–183 (DSPG) is G3 motif. Residue 235–241 (FLVNAWD) participates in GTP binding. Residues 238 to 241 (NAWD) are G4 motif. A region of interest (G5 motif) is located at residue asparagine 268. 292–293 (SI) lines the GTP pocket. The middle domain stretch occupies residues 311–571 (GFPKFMDSLN…TAVTGILLGP (261 aa)). Residues 347–378 (REAVARRIPLLEQDVNELKKRIDSVEPEFNKL) are a coiled coil. The stretch at 522–574 (MGLLSLSKGNLAGFALAGAGFDWKNILLNYFTVIGIGGIITAVTGILLGPIGF) is an intramembrane region. The paddle domain stretch occupies residues 572–606 (IGFALLGLGVGFLQADQARRELVKTAKKELVKHLP). Topologically, residues 575-693 (ALLGLGVGFL…AYSNLLAYYS (119 aa)) are cytoplasmic. The GED stretch occupies residues 607-693 (QVAHEQSQVV…AYSNLLAYYS (87 aa)). Positions 661 to 688 (ESEFNRLKNLQEDVIAQLQKIEAAYSNL) form a coiled coil.

This sequence belongs to the TRAFAC class dynamin-like GTPase superfamily. Dynamin/Fzo/YdjA family. Mitofusin subfamily. Homodimer. Self-assembles in the presence of GMP-PNP and liposomes, and probably also in the presence of GTP.

Its subcellular location is the cell inner membrane. The enzyme catalyses GTP + H2O = GDP + phosphate + H(+). Its function is as follows. Dynamin-related GTPase probably involved in membrane remodeling. Lipid and nucleotide-binding are thought to induce a large intramolecular rearrangement, leading to assembly on lipid bilayers and possible membrane curving. In the presence of the non-hydrolyzable GTP analog GMP-PNP self-assembles on a lipid bilayer; this does not stimulate subsequent GTPase activity. Does not bind lipids in the presence of GDP; perhaps GTP hydrolysis disrupts membrane-binding. The sequence is that of Bacterial dynamin-like protein from Nostoc punctiforme (strain ATCC 29133 / PCC 73102).